The primary structure comprises 205 residues: MEINYELYLITDRRFLKGRQLKKIVEDAILGGVTIVQVREKDVSTREFYNVAKEVKEVTDYYKVPIIINDRLDIAQAIDASGVHLGQKDMHLNIAREILGKDKIIGISVGNVKEALEAQNNGADYLGIGTIFPTGSKKDVDAIIGIDGLSKIKDSISIPSVAIGGINKTNFKDVLKTGIEGISVISAILDEDDIKLAANNLLINK.

4-amino-2-methyl-5-(diphosphooxymethyl)pyrimidine contacts are provided by residues 37–41 (QVREK) and N69. Positions 70 and 89 each coordinate Mg(2+). S108 is a binding site for 4-amino-2-methyl-5-(diphosphooxymethyl)pyrimidine. 134–136 (TGS) provides a ligand contact to 2-[(2R,5Z)-2-carboxy-4-methylthiazol-5(2H)-ylidene]ethyl phosphate. 4-amino-2-methyl-5-(diphosphooxymethyl)pyrimidine is bound at residue K137. 2-[(2R,5Z)-2-carboxy-4-methylthiazol-5(2H)-ylidene]ethyl phosphate is bound by residues G165 and 185–186 (IS).

The protein belongs to the thiamine-phosphate synthase family. Mg(2+) is required as a cofactor.

It carries out the reaction 2-[(2R,5Z)-2-carboxy-4-methylthiazol-5(2H)-ylidene]ethyl phosphate + 4-amino-2-methyl-5-(diphosphooxymethyl)pyrimidine + 2 H(+) = thiamine phosphate + CO2 + diphosphate. The enzyme catalyses 2-(2-carboxy-4-methylthiazol-5-yl)ethyl phosphate + 4-amino-2-methyl-5-(diphosphooxymethyl)pyrimidine + 2 H(+) = thiamine phosphate + CO2 + diphosphate. The catalysed reaction is 4-methyl-5-(2-phosphooxyethyl)-thiazole + 4-amino-2-methyl-5-(diphosphooxymethyl)pyrimidine + H(+) = thiamine phosphate + diphosphate. The protein operates within cofactor biosynthesis; thiamine diphosphate biosynthesis; thiamine phosphate from 4-amino-2-methyl-5-diphosphomethylpyrimidine and 4-methyl-5-(2-phosphoethyl)-thiazole: step 1/1. Its function is as follows. Condenses 4-methyl-5-(beta-hydroxyethyl)thiazole monophosphate (THZ-P) and 2-methyl-4-amino-5-hydroxymethyl pyrimidine pyrophosphate (HMP-PP) to form thiamine monophosphate (TMP). This Clostridium botulinum (strain Kyoto / Type A2) protein is Thiamine-phosphate synthase.